The primary structure comprises 126 residues: Large ribosomal subunit protein eL28 (126 aa).

Position 2 is an N-acetylserine (Ser-2).

The protein belongs to the eukaryotic ribosomal protein eL28 family.

The sequence is that of Large ribosomal subunit protein eL28 (rpl-28) from Caenorhabditis elegans.